Here is a 150-residue protein sequence, read N- to C-terminus: uncharacterized protein (150 aa).

Polar residues predominate over residues 81 to 90 (TTKPSCSFAQ). Residues 81-125 (TTKPSCSFAQPVTPRTREGAGVRGHRRRRRGSLSLIPWKTSNDKQ) are disordered.

This is an uncharacterized protein from Homo sapiens (Human).